A 760-amino-acid polypeptide reads, in one-letter code: Xaa-Pro dipeptidyl-peptidase (760 aa).

Residues Ser-349, Asp-469, and His-499 each act as charge relay system in the active site.

Belongs to the peptidase S15 family. Homodimer.

The protein resides in the cytoplasm. The catalysed reaction is Hydrolyzes Xaa-Pro-|- bonds to release unblocked, N-terminal dipeptides from substrates including Ala-Pro-|-p-nitroanilide and (sequentially) Tyr-Pro-|-Phe-Pro-|-Gly-Pro-|-Ile.. In terms of biological role, removes N-terminal dipeptides sequentially from polypeptides having unsubstituted N-termini provided that the penultimate residue is proline. This is Xaa-Pro dipeptidyl-peptidase from Streptococcus pyogenes serotype M3 (strain ATCC BAA-595 / MGAS315).